Reading from the N-terminus, the 602-residue chain is Glutamine--fructose-6-phosphate aminotransferase [isomerizing] (602 aa).

Cys2 acts as the Nucleophile; for GATase activity in catalysis. The 216-residue stretch at 2-217 (CGIVGVVGNT…DQELVIVKAD (216 aa)) folds into the Glutamine amidotransferase type-2 domain. The interval 67-87 (IGHTRWATHGKPTEDNAHPHR) is disordered. Positions 77–87 (KPTEDNAHPHR) are enriched in basic and acidic residues. SIS domains lie at 283–422 (IIKA…ANGN) and 455–592 (VREL…VDKP). Catalysis depends on Lys597, which acts as the For Fru-6P isomerization activity.

As to quaternary structure, homodimer.

The protein resides in the cytoplasm. It carries out the reaction D-fructose 6-phosphate + L-glutamine = D-glucosamine 6-phosphate + L-glutamate. Catalyzes the first step in hexosamine metabolism, converting fructose-6P into glucosamine-6P using glutamine as a nitrogen source. The sequence is that of Glutamine--fructose-6-phosphate aminotransferase [isomerizing] from Streptococcus pneumoniae (strain ATCC BAA-255 / R6).